A 57-amino-acid chain; its full sequence is Peptide BmKa1 (57 aa).

An N-terminal signal peptide occupies residues Met1 to Ser22. Acidic residues-rich tracts occupy residues Gly20–Ser29 and Val45–Asp57. Residues Gly20–Asp57 are disordered.

Belongs to the non-disulfide-bridged peptide (NDBP) superfamily. Expressed by the venom gland.

The protein localises to the secreted. The chain is Peptide BmKa1 from Olivierus martensii (Manchurian scorpion).